The following is a 369-amino-acid chain: uncharacterized protein (369 aa).

The first 19 residues, 1-19, serve as a signal peptide directing secretion; it reads MKKLIAVAVLSACGSLAHA.

This is an uncharacterized protein from Haemophilus influenzae (strain ATCC 51907 / DSM 11121 / KW20 / Rd).